The following is a 409-amino-acid chain: 1-deoxy-D-xylulose 5-phosphate reductoisomerase (409 aa).

8 residues coordinate NADPH: threonine 10, glycine 11, serine 12, isoleucine 13, glycine 36, arginine 37, asparagine 38, and asparagine 126. Lysine 127 serves as a coordination point for 1-deoxy-D-xylulose 5-phosphate. Glutamate 128 is an NADPH binding site. Aspartate 152 provides a ligand contact to Mn(2+). Residues serine 153, glutamate 154, serine 190, and histidine 213 each coordinate 1-deoxy-D-xylulose 5-phosphate. Glutamate 154 serves as a coordination point for Mn(2+). Glycine 219 lines the NADPH pocket. Residues serine 226, asparagine 231, lysine 232, and glutamate 235 each coordinate 1-deoxy-D-xylulose 5-phosphate. Glutamate 235 provides a ligand contact to Mn(2+).

It belongs to the DXR family. Mg(2+) serves as cofactor. Requires Mn(2+) as cofactor.

It carries out the reaction 2-C-methyl-D-erythritol 4-phosphate + NADP(+) = 1-deoxy-D-xylulose 5-phosphate + NADPH + H(+). It participates in isoprenoid biosynthesis; isopentenyl diphosphate biosynthesis via DXP pathway; isopentenyl diphosphate from 1-deoxy-D-xylulose 5-phosphate: step 1/6. Catalyzes the NADPH-dependent rearrangement and reduction of 1-deoxy-D-xylulose-5-phosphate (DXP) to 2-C-methyl-D-erythritol 4-phosphate (MEP). This chain is 1-deoxy-D-xylulose 5-phosphate reductoisomerase, found in Prochlorococcus marinus (strain MIT 9515).